Consider the following 164-residue polypeptide: CASP-like protein 1C2 (164 aa).

Over M1 to L8 the chain is Cytoplasmic. A helical transmembrane segment spans residues G9–I29. The Extracellular segment spans residues T30–A51. A helical membrane pass occupies residues F52 to L72. At P73–K80 the chain is on the cytoplasmic side. A helical transmembrane segment spans residues F81–V101. At A102–Q129 the chain is on the extracellular side. The helical transmembrane segment at I130 to F150 threads the bilayer. The Cytoplasmic segment spans residues S151–S164.

Belongs to the Casparian strip membrane proteins (CASP) family. Homodimer and heterodimers.

The protein localises to the cell membrane. The protein is CASP-like protein 1C2 of Arabidopsis thaliana (Mouse-ear cress).